Consider the following 538-residue polypeptide: ATP synthase subunit beta 2 (538 aa).

The span at 1–10 (MADPQATNGT) shows a compositional bias: polar residues. Residues 1–30 (MADPQATNGTGAACAERDASDVGDVSDVGD) form a disordered region. ATP is bound at residue 185-192 (GGAGVGKT). Basic and acidic residues predominate over residues 494 to 505 (AAAREADARREA). The disordered stretch occupies residues 494–538 (AAAREADARREAAAAASVAGPGTTSGTTSDPASGSAEPQGARHGR). Positions 506 to 529 (AAAASVAGPGTTSGTTSDPASGSA) are enriched in low complexity.

It belongs to the ATPase alpha/beta chains family. In terms of assembly, F-type ATPases have 2 components, CF(1) - the catalytic core - and CF(0) - the membrane proton channel. CF(1) has five subunits: alpha(3), beta(3), gamma(1), delta(1), epsilon(1). CF(0) has three main subunits: a(1), b(2) and c(9-12). The alpha and beta chains form an alternating ring which encloses part of the gamma chain. CF(1) is attached to CF(0) by a central stalk formed by the gamma and epsilon chains, while a peripheral stalk is formed by the delta and b chains.

Its subcellular location is the cell inner membrane. It carries out the reaction ATP + H2O + 4 H(+)(in) = ADP + phosphate + 5 H(+)(out). In terms of biological role, produces ATP from ADP in the presence of a proton gradient across the membrane. The catalytic sites are hosted primarily by the beta subunits. The protein is ATP synthase subunit beta 2 of Burkholderia pseudomallei (strain K96243).